Here is a 232-residue protein sequence, read N- to C-terminus: NAD(P)H-quinone oxidoreductase subunit K 1 (232 aa).

4 residues coordinate [4Fe-4S] cluster: cysteine 49, cysteine 50, cysteine 114, and cysteine 145.

Belongs to the complex I 20 kDa subunit family. In terms of assembly, NDH-1 can be composed of about 15 different subunits; different subcomplexes with different compositions have been identified which probably have different functions. Requires [4Fe-4S] cluster as cofactor.

The protein localises to the cell inner membrane. It catalyses the reaction a plastoquinone + NADH + (n+1) H(+)(in) = a plastoquinol + NAD(+) + n H(+)(out). The catalysed reaction is a plastoquinone + NADPH + (n+1) H(+)(in) = a plastoquinol + NADP(+) + n H(+)(out). In terms of biological role, NDH-1 shuttles electrons from an unknown electron donor, via FMN and iron-sulfur (Fe-S) centers, to quinones in the respiratory and/or the photosynthetic chain. The immediate electron acceptor for the enzyme in this species is believed to be plastoquinone. Couples the redox reaction to proton translocation, and thus conserves the redox energy in a proton gradient. Cyanobacterial NDH-1 also plays a role in inorganic carbon-concentration. This is NAD(P)H-quinone oxidoreductase subunit K 1 from Gloeobacter violaceus (strain ATCC 29082 / PCC 7421).